An 83-amino-acid chain; its full sequence is Small ribosomal subunit protein bS18A (83 aa).

It belongs to the bacterial ribosomal protein bS18 family. Part of the 30S ribosomal subunit. Forms a tight heterodimer with protein bS6.

In terms of biological role, binds as a heterodimer with protein bS6 to the central domain of the 16S rRNA, where it helps stabilize the platform of the 30S subunit. This is Small ribosomal subunit protein bS18A from Nocardia farcinica (strain IFM 10152).